A 1786-amino-acid polypeptide reads, in one-letter code: Transcription initiation factor TFIID subunit 1b (1786 aa).

2 disordered regions span residues 54–83 and 350–372; these read EDYDEQGGQEKEHVPVEKSFDSEEREPVVL and FGSRGSQSTNESTNKSRHHPQLL. Over residues 61-83 the composition is skewed to basic and acidic residues; sequence GQEKEHVPVEKSFDSEEREPVVL. The segment covering 352 to 362 has biased composition (polar residues); the sequence is SRGSQSTNEST. Residues 574–650 form the Ubiquitin-like domain; the sequence is MTIVVKSLGG…VHLLRTKVHL (77 aa). Over residues 1303–1313 the composition is skewed to basic residues; sequence MKTNKHCPKYR. Disordered stretches follow at residues 1303–1382, 1397–1471, and 1596–1634; these read MKTN…DVAA, LKIS…KDQA, and SEREEEKRRKAKQKKKLQRGILENYPPRRNDGISSESGQ. Positions 1357–1377 are enriched in polar residues; it reads TKISVNEATKVGDSTSKTPGS. Basic residues predominate over residues 1397-1407; the sequence is LKISSKAKPKA. Residues 1433–1464 show a composition bias toward polar residues; sequence HNPSVSGQLLPSTETDQAASSRYTTSVPQPSL. Coiled-coil stretches lie at residues 1591 to 1620 and 1752 to 1786; these read REVIRSEREEEKRRKAKQKKKLQRGILENY and LADELLVKCDRLLDEYRDELKEAEKGIVDSSDSLR. Positions 1604–1613 are enriched in basic residues; that stretch reads RKAKQKKKLQ. A Bromo domain is found at 1656-1774; that stretch reads KRRKKGQVGL…DEYRDELKEA (119 aa).

The protein belongs to the TAF1 family. Component of the TFIID complex. TFIID is composed of TATA binding protein (TBP) and a number of TBP-associated factors (TAFs) whose MWs range from 14-217 kDa. Expressed in roots, shoots, leaves and inflorescences.

Its subcellular location is the nucleus. Functionally, TAFs are components of the transcription factor IID (TFIID) complex that is essential for mediating regulation of RNA polymerase transcription. Core scaffold of the TFIID complex. Acts as a histone acetyltransferase involved in the light regulation of growth and gene expression. Required for H3K9, H3K27, and H4K12 acetylation on the target promoters. The protein is Transcription initiation factor TFIID subunit 1b (TAF1B) of Arabidopsis thaliana (Mouse-ear cress).